The following is a 154-amino-acid chain: 6,7-dimethyl-8-ribityllumazine synthase (154 aa).

5-amino-6-(D-ribitylamino)uracil-binding positions include F26, 60–62 (ALE), and 84–86 (CII). 89–90 (ET) is a (2S)-2-hydroxy-3-oxobutyl phosphate binding site. H92 serves as the catalytic Proton donor. 5-amino-6-(D-ribitylamino)uracil is bound at residue N117. R131 contributes to the (2S)-2-hydroxy-3-oxobutyl phosphate binding site.

The protein belongs to the DMRL synthase family.

The catalysed reaction is (2S)-2-hydroxy-3-oxobutyl phosphate + 5-amino-6-(D-ribitylamino)uracil = 6,7-dimethyl-8-(1-D-ribityl)lumazine + phosphate + 2 H2O + H(+). The protein operates within cofactor biosynthesis; riboflavin biosynthesis; riboflavin from 2-hydroxy-3-oxobutyl phosphate and 5-amino-6-(D-ribitylamino)uracil: step 1/2. Catalyzes the formation of 6,7-dimethyl-8-ribityllumazine by condensation of 5-amino-6-(D-ribitylamino)uracil with 3,4-dihydroxy-2-butanone 4-phosphate. This is the penultimate step in the biosynthesis of riboflavin. The sequence is that of 6,7-dimethyl-8-ribityllumazine synthase from Polaromonas sp. (strain JS666 / ATCC BAA-500).